Consider the following 469-residue polypeptide: Programmed cell death protein 4 (469 aa).

Methionine 1 carries the post-translational modification N-acetylmethionine. Disordered stretches follow at residues 1–30 (MDVE…DEEN) and 58–128 (KAKR…GTPG). Over residues 7-23 (QILNVNPTDPDNLSDSL) the composition is skewed to polar residues. Serine 25 bears the Phosphoserine mark. A Nuclear localization signal motif is present at residues 58–64 (KAKRRLR). Residue serine 67 is modified to Phosphoserine; by PKB and RPS6KB1. 5 positions are modified to phosphoserine: serine 68, serine 71, serine 76, serine 78, and serine 94. Positions 70 to 76 (DSGRGDS) match the Phosphodegron motif. Positions 114–125 (KKGGAGGKGVWG) are enriched in gly residues. Residue tyrosine 152 is modified to Phosphotyrosine. Residues 163 to 284 (AFEKTLTPII…CNTYIDSYKG (122 aa)) form the MI 1 domain. Serine 313 and serine 317 each carry phosphoserine. The 124-residue stretch at 326 to 449 (HLVKEIDMLL…SKQLRDLCPS (124 aa)) folds into the MI 2 domain. Positions 448-454 (PSRGRKR) match the Nuclear localization signal motif. Serine 457 carries the post-translational modification Phosphoserine.

This sequence belongs to the PDCD4 family. In terms of assembly, interacts (via MI domains) with EIF4A2. Interacts (via MI domains) with EIF4A1 (via N-terminal domain). Heterotrimer with EIF4A1; one molecule of PDCD4 binds two molecules of EIF4A1. Interacts with EIF4G1. May form a complex with EIF4A1 and EIF4G1. The interaction between PDCD4 and EIF4A1 interferes with the interaction between EIF4A1 and EIF4G. When phosphorylated, interacts with BTRC and FBXW11. Post-translationally, polyubiquitinated, leading to its proteasomal degradation. Rapidly degraded in response to mitogens. Phosphorylation of the phosphodegron promotes interaction with BTRC and proteasomal degradation. In terms of processing, phosphorylated at Ser-67 by RPS6KB1 in response to mitogens; phosphorylation promotes proteasomal degradation of PDCD4.

It is found in the nucleus. The protein resides in the cytoplasm. Functionally, inhibits translation initiation and cap-dependent translation. May excert its function by hindering the interaction between EIF4A1 and EIF4G. Inhibits the helicase activity of EIF4A. Modulates the activation of JUN kinase. Down-regulates the expression of MAP4K1, thus inhibiting events important in driving invasion, namely, MAPK85 activation and consequent JUN-dependent transcription. May play a role in apoptosis. Tumor suppressor. Inhibits tumor promoter-induced neoplastic transformation. Binds RNA. The protein is Programmed cell death protein 4 (Pdcd4) of Rattus norvegicus (Rat).